Here is a 59-residue protein sequence, read N- to C-terminus: Large ribosomal subunit protein uL30 (59 aa).

Belongs to the universal ribosomal protein uL30 family. Part of the 50S ribosomal subunit.

The polypeptide is Large ribosomal subunit protein uL30 (Acetivibrio thermocellus (strain ATCC 27405 / DSM 1237 / JCM 9322 / NBRC 103400 / NCIMB 10682 / NRRL B-4536 / VPI 7372) (Clostridium thermocellum)).